A 1034-amino-acid polypeptide reads, in one-letter code: AP-3 complex subunit delta (1034 aa).

HEAT repeat units follow at residues 35 to 72, 143 to 180, 181 to 217, 219 to 255, 258 to 297, 299 to 337, 338 to 374, 376 to 414, 415 to 452, and 570 to 609; these read KYISTCIEEIKQELRQDNISVKCNAVAKLTYIQMLGYD, DLSRDLANDIMTLMSSTKPYLRMKAVLMMYKVFLRYPE, ALRPAFPKLKEKLEDPDPGVQSAAVNVICELARKNPK, YLPLAPIFFKLMTTSTNNWMLIKIIKLFGALTPLEPR, KKLIEPLTNLIHSTSAMSLLYECINTVIAVLISISSGMPN, SASIQLCVQKLRILIEDSDQNLKYLGLLAMSKILKTHPK, SVQAHKDLILACLDDKDESIRLRALDLLYGMVSKKNL, EIVKRLLGHMERAEGSAYRDELLYKVIEICAQSSYLYVT, NFEWYLTVLVELIQLEAGSRHGRLIAEQLLDVAIRVPV, and NSACMLIEMLRNQLSTSTDAMAMDTTTEGGIPPLAIEIVQ. Disordered stretches follow at residues 637–660, 669–688, 701–723, and 758–1034; these read DLDEWINAPPPEDAASSSSSEHDK, QAGTGADGGEKRRQSLELTP, EQSNNPHYLKSTPTASGASNADQ, and QEQQ…KEIL. Ser-683 bears the Phosphoserine mark. Thr-687 is modified (phosphothreonine). The span at 769 to 784 shows a compositional bias: basic residues; the sequence is GKKKHKKGKKSKKAKN. Basic and acidic residues-rich tracts occupy residues 822–836 and 882–906; these read KDGKYDPNDPHRALD and KDKDKDKERKVKREHRESKRERKEA. Residues 928–942 show a composition bias toward low complexity; sequence SATSNNNNTSTVLPD. The segment covering 986-1003 has biased composition (basic residues); that stretch reads KVHKKKHKKEKSQRKEKK. Low complexity predominate over residues 1007–1016; the sequence is ESASVSAIVS. Over residues 1025 to 1034 the composition is skewed to polar residues; it reads GISTPSKEIL.

Belongs to the adaptor complexes large subunit family. Adaptor protein complex 3 (AP-3) is a heterotetramer composed of two large chains (delta and beta3), a medium chain (mu3) and a small chain (sigma3).

The protein localises to the cytoplasmic vesicle. It is found in the clathrin-coated vesicle membrane. It localises to the golgi apparatus. In terms of biological role, part of the AP-3 complex, an adapter-related complex which is not clathrin-associated. The complex is associated with the Golgi region as well as more peripheral structures. It facilitates the budding of vesicles from the Golgi membrane and may be directly involved in trafficking to lysosomes. May be a coat protein involved in the formation of specialized structures like pigment granules. The polypeptide is AP-3 complex subunit delta (g) (Drosophila melanogaster (Fruit fly)).